The chain runs to 429 residues: Enolase (429 aa).

Position 165 (Gln-165) interacts with (2R)-2-phosphoglycerate. Glu-207 serves as the catalytic Proton donor. Residues Asp-244, Glu-287, and Asp-314 each coordinate Mg(2+). (2R)-2-phosphoglycerate is bound by residues Lys-339, Arg-368, Ser-369, and Lys-390. Lys-339 acts as the Proton acceptor in catalysis.

It belongs to the enolase family. The cofactor is Mg(2+).

It localises to the cytoplasm. The protein localises to the secreted. Its subcellular location is the cell surface. The enzyme catalyses (2R)-2-phosphoglycerate = phosphoenolpyruvate + H2O. The protein operates within carbohydrate degradation; glycolysis; pyruvate from D-glyceraldehyde 3-phosphate: step 4/5. Catalyzes the reversible conversion of 2-phosphoglycerate (2-PG) into phosphoenolpyruvate (PEP). It is essential for the degradation of carbohydrates via glycolysis. In Roseiflexus castenholzii (strain DSM 13941 / HLO8), this protein is Enolase.